Reading from the N-terminus, the 162-residue chain is Class I hydrophobin 3 (162 aa).

Disulfide bonds link cysteine 36–cysteine 150 and cysteine 151–cysteine 159.

The protein belongs to the fungal hydrophobin family. As to quaternary structure, self-assembles to form functional amyloid fibrils called rodlets. Self-assembly into fibrillar rodlets occurs spontaneously at hydrophobic:hydrophilic interfaces and the rodlets further associate laterally to form amphipathic monolayers.

The protein resides in the secreted. The protein localises to the cell wall. Functionally, aerial growth, conidiation, and dispersal of filamentous fungi in the environment rely upon a capability of their secreting small amphipathic proteins called hydrophobins (HPBs) with low sequence identity. Class I can self-assemble into an outermost layer of rodlet bundles on aerial cell surfaces, conferring cellular hydrophobicity that supports fungal growth, development and dispersal; whereas Class II form highly ordered films at water-air interfaces through intermolecular interactions but contribute nothing to the rodlet structure. In Coprinopsis cinerea (strain Okayama-7 / 130 / ATCC MYA-4618 / FGSC 9003) (Inky cap fungus), this protein is Class I hydrophobin 3.